Consider the following 465-residue polypeptide: MIVPSLEELNSFKYSDLQNLAKSLGLRANLRADKLLRALKAHLKNEARKENENQDEIQTSASSCDEPEIQTSSQEQAEREPDDHVTKTRGRRKTVHRSPDSQANGNVQTEKKLPPVPNLQNHSEIKLCGPTKSQNQEKHENQVLRTAVEVPSLPNESQGDENTVSSGKHGIDGNEDPRVPSKRKKSLYTDGFSKPGKNKTASTTPNFKKLHEARFKEMESIDQYVERKKKHFEEHNSFNELKVLQRQPVTKGVPATPVPARGRLSVACTPGSQRRSQGRPHAGRSTLCVKGSAKRSALSAAKMNVRFSAATKDNEHKRSLTKTPARKSPHVTTSVNTPKGQAVLGTHKLKTTRGESVAVITPFKLTTEASQTPISHKKPVFDLKASLSRPLNYEPHKGKLKPWGQSKENNSLHEHVNRVSFHKKTYKQPRLQTREEQRKKHERERKEKKEKVLGVRRGLIIAERS.

Residues 32 to 61 (ADKLLRALKAHLKNEARKENENQDEIQTSA) adopt a coiled-coil conformation. 3 disordered regions span residues 44–123 (KNEA…QNHS), 148–207 (VEVP…TPNF), and 252–294 (GVPA…GSAK). Polar residues predominate over residues 56–75 (EIQTSASSCDEPEIQTSSQE). A compositionally biased stretch (basic and acidic residues) spans 76-86 (QAEREPDDHVT). A compositionally biased stretch (basic residues) spans 87–96 (KTRGRRKTVH). Position 152 is a phosphoserine (Ser-152). Polar residues predominate over residues 154–166 (PNESQGDENTVSS). Basic and acidic residues predominate over residues 169-179 (HGIDGNEDPRV). Thr-204 carries the post-translational modification Phosphothreonine. The segment at 262–405 (GRLSVACTPG…HKGKLKPWGQ (144 aa)) is interaction with microtubules. Position 265 is a phosphoserine (Ser-265). Thr-269 is subject to Phosphothreonine. 4 positions are modified to phosphoserine: Ser-272, Ser-292, Ser-299, and Ser-334. Positions 308 to 338 (SAATKDNEHKRSLTKTPARKSPHVTTSVNTP) are disordered. Phosphothreonine is present on residues Thr-337, Thr-361, and Thr-372. A phosphoserine mark is found at Ser-375 and Ser-386. Positions 396–454 (HKGKLKPWGQSKENNSLHEHVNRVSFHKKTYKQPRLQTREEQRKKHERERKEKKEKVLG) are disordered. Residues 407-413 (KENNSLH) carry the KEN box motif. Residues 430 to 457 (RLQTREEQRKKHERERKEKKEKVLGVRR) are a coiled coil. The span at 432–453 (QTREEQRKKHERERKEKKEKVL) shows a compositional bias: basic and acidic residues.

This sequence belongs to the NUSAP family. Interacts with DNA and microtubules. Microtubule bundling is inhibited by IPO7, KPNA2 and KPNB1 while association with DNA is also inhibited by IPO7 and KPNA2. In terms of processing, ubiquitinated. Ubiquitination by FZR1 may lead to proteasome-dependent degradation of this protein.

It is found in the cytoplasm. The protein resides in the nucleus. It localises to the nucleolus. Its subcellular location is the cytoskeleton. The protein localises to the spindle. It is found in the chromosome. In terms of biological role, microtubule-associated protein with the capacity to bundle and stabilize microtubules. May associate with chromosomes and promote the organization of mitotic spindle microtubules around them. The sequence is that of Nucleolar and spindle-associated protein 1 (NUSAP1) from Bos taurus (Bovine).